The following is a 109-amino-acid chain: Small ribosomal subunit protein bS20 (109 aa).

Belongs to the bacterial ribosomal protein bS20 family.

Functionally, binds directly to 16S ribosomal RNA. This is Small ribosomal subunit protein bS20 from Synechococcus sp. (strain JA-2-3B'a(2-13)) (Cyanobacteria bacterium Yellowstone B-Prime).